The following is a 371-amino-acid chain: Mitogen-activated protein kinase homolog MMK2 (371 aa).

Positions valine 37–methionine 323 constitute a Protein kinase domain. ATP is bound by residues valine 43 to valine 51 and lysine 66. Aspartate 163 (proton acceptor) is an active-site residue. Position 195 is a phosphothreonine (threonine 195). The short motif at threonine 195–tyrosine 197 is the TXY element. Tyrosine 197 is subject to Phosphotyrosine.

This sequence belongs to the protein kinase superfamily. CMGC Ser/Thr protein kinase family. MAP kinase subfamily. Mg(2+) serves as cofactor. Post-translationally, dually phosphorylated on Thr-195 and Tyr-197, which activates the enzyme. Autophosphorylated.

It carries out the reaction L-seryl-[protein] + ATP = O-phospho-L-seryl-[protein] + ADP + H(+). The catalysed reaction is L-threonyl-[protein] + ATP = O-phospho-L-threonyl-[protein] + ADP + H(+). With respect to regulation, activated by tyrosine and threonine phosphorylation. The polypeptide is Mitogen-activated protein kinase homolog MMK2 (MMK2) (Medicago sativa (Alfalfa)).